The primary structure comprises 178 residues: Gamma-crystallin S (178 aa).

Serine 2 carries the N-acetylserine modification. The interval 2–5 (SKAG) is N-terminal arm. Beta/gamma crystallin 'Greek key' domains follow at residues 6–44 (TKIT…RVEG) and 45–87 (GTWA…RAVH). The interval 88–93 (LSSGGQ) is connecting peptide. 2 consecutive Beta/gamma crystallin 'Greek key' domains span residues 94–134 (YKLQ…KVLE) and 135–177 (GAWI…RRIV).

The protein belongs to the beta/gamma-crystallin family. In terms of assembly, monomer.

In terms of biological role, crystallins are the dominant structural components of the vertebrate eye lens. This is Gamma-crystallin S (CRYGS) from Bos taurus (Bovine).